A 98-amino-acid chain; its full sequence is MSVSIKPLEDRIVVRQLDAEQTTASGLVIPDSAKEKPQEGEVVAVGPGRVDDNGNRVPVDVAVGDVVLYSKYGGTEVKTGGEELLVLSARDVLAIVVK.

The protein belongs to the GroES chaperonin family. In terms of assembly, heptamer of 7 subunits arranged in a ring. Interacts with the chaperonin GroEL.

It is found in the cytoplasm. In terms of biological role, together with the chaperonin GroEL, plays an essential role in assisting protein folding. The GroEL-GroES system forms a nano-cage that allows encapsulation of the non-native substrate proteins and provides a physical environment optimized to promote and accelerate protein folding. GroES binds to the apical surface of the GroEL ring, thereby capping the opening of the GroEL channel. In Renibacterium salmoninarum (strain ATCC 33209 / DSM 20767 / JCM 11484 / NBRC 15589 / NCIMB 2235), this protein is Co-chaperonin GroES.